We begin with the raw amino-acid sequence, 364 residues long: MKYLFAGGGTGGHIYPAIAIAKEILKNEKNAQILFVGTKKGLENELVPREGFELKTITVQGFKRKLSLDTLKTIYKAMVGLKEANNILNEFKPDVVIGTGGYVCGPVLMMAALKGIPTLIHEQNAFPGLTNKVLSRFVKVVAVSFEESVKYFKNKEKVVVTGNPIRRELLKVTKEEGLKNLGFYSDKPLIVSVGGSRGAEKINFTMVEFLKQKDKNLQVLIITGANQYEKVLEKVKTETIDIDETVKIIPYCHNMQDVYAAADIIICRAGAITLAEITAKGVASILIPSPYVANNHQEYNARVLEKAGASYVILEKDLTAEKLYKKIKYLLDNPQVLSKMRDNAQKISKIDAAEKIYKLIKSIT.

Residues 10–12 (TGG), Asn124, Arg166, Ser196, and Gln297 contribute to the UDP-N-acetyl-alpha-D-glucosamine site.

Belongs to the glycosyltransferase 28 family. MurG subfamily.

The protein resides in the cell membrane. The enzyme catalyses di-trans,octa-cis-undecaprenyl diphospho-N-acetyl-alpha-D-muramoyl-L-alanyl-D-glutamyl-meso-2,6-diaminopimeloyl-D-alanyl-D-alanine + UDP-N-acetyl-alpha-D-glucosamine = di-trans,octa-cis-undecaprenyl diphospho-[N-acetyl-alpha-D-glucosaminyl-(1-&gt;4)]-N-acetyl-alpha-D-muramoyl-L-alanyl-D-glutamyl-meso-2,6-diaminopimeloyl-D-alanyl-D-alanine + UDP + H(+). It participates in cell wall biogenesis; peptidoglycan biosynthesis. Functionally, cell wall formation. Catalyzes the transfer of a GlcNAc subunit on undecaprenyl-pyrophosphoryl-MurNAc-pentapeptide (lipid intermediate I) to form undecaprenyl-pyrophosphoryl-MurNAc-(pentapeptide)GlcNAc (lipid intermediate II). The sequence is that of UDP-N-acetylglucosamine--N-acetylmuramyl-(pentapeptide) pyrophosphoryl-undecaprenol N-acetylglucosamine transferase from Thermoanaerobacter pseudethanolicus (strain ATCC 33223 / 39E) (Clostridium thermohydrosulfuricum).